A 761-amino-acid polypeptide reads, in one-letter code: Protein PHTF1 (761 aa).

One can recognise a PHTF domain in the interval 6-150; sequence RDAISWYQKK…VHCQIVSTQI (145 aa). A run of 3 helical transmembrane segments spans residues 77 to 97, 99 to 119, and 121 to 141; these read GLVRVVFFPLFSSWWIQVTSL, IFVWLLLLYLMQVTAVVLYLL, and PIVSASEVLGPLCLMLLMGTV. The segment at 152 to 184 is disordered; the sequence is RPSGNNGNRRRRKLRKTVNGDGSRDNGNNSPDK. The segment covering 170-181 has biased composition (low complexity); it reads NGDGSRDNGNNS. N-linked (GlcNAc...) asparagine glycans are attached at residues Asn-179 and Asn-224. Residues Ser-272, Ser-276, Ser-277, Ser-333, and Ser-335 each carry the phosphoserine modification. The tract at residues 345 to 414 is disordered; the sequence is VFSQGSRSGM…NTIHSGTKRD (70 aa). Over residues 347–363 the composition is skewed to low complexity; it reads SQGSRSGMSGGSRSLNL. N-linked (GlcNAc...) asparagine glycosylation is present at Asn-362. Positions 364-375 are enriched in basic and acidic residues; sequence SRRDSESTRHDS. Asn-430 is a glycosylation site (N-linked (GlcNAc...) asparagine). Transmembrane regions (helical) follow at residues 472–492, 514–534, 610–630, and 644–664; these read GVGYQMLGNAVTVGLALFPFL, TLFCGAPPVTPVVILSIINFI, VVVSSVFLLTLSIAFICCAQV, and WEFLIWETALLLFLLRLASLG. Asn-673 and Asn-732 each carry an N-linked (GlcNAc...) asparagine glycan. A helical transmembrane segment spans residues 736 to 756; it reads VVILSAVSGVISDLLGFNIRL.

As to quaternary structure, interacts with FEM1B. In terms of tissue distribution, widely expressed with highest levels in testis.

The protein localises to the endoplasmic reticulum membrane. Its subcellular location is the golgi apparatus. It localises to the cis-Golgi network membrane. The sequence is that of Protein PHTF1 from Mus musculus (Mouse).